Reading from the N-terminus, the 512-residue chain is Glycerol-3-phosphate dehydrogenase (512 aa).

FAD is bound at residue 16-44 (DVAVVGGGINGVGIAADAAGRGLSVFLCE).

It belongs to the FAD-dependent glycerol-3-phosphate dehydrogenase family. It depends on FAD as a cofactor.

It is found in the cytoplasm. The catalysed reaction is a quinone + sn-glycerol 3-phosphate = dihydroxyacetone phosphate + a quinol. This chain is Glycerol-3-phosphate dehydrogenase (glpD), found in Pseudomonas aeruginosa (strain ATCC 15692 / DSM 22644 / CIP 104116 / JCM 14847 / LMG 12228 / 1C / PRS 101 / PAO1).